The following is a 416-amino-acid chain: D-amino acid dehydrogenase (416 aa).

Residue Ile3 to Tyr17 coordinates FAD.

It belongs to the DadA oxidoreductase family. FAD serves as cofactor.

The catalysed reaction is a D-alpha-amino acid + A + H2O = a 2-oxocarboxylate + AH2 + NH4(+). Its pathway is amino-acid degradation; D-alanine degradation; NH(3) and pyruvate from D-alanine: step 1/1. Oxidative deamination of D-amino acids. The polypeptide is D-amino acid dehydrogenase (Brucella anthropi (strain ATCC 49188 / DSM 6882 / CCUG 24695 / JCM 21032 / LMG 3331 / NBRC 15819 / NCTC 12168 / Alc 37) (Ochrobactrum anthropi)).